A 512-amino-acid polypeptide reads, in one-letter code: MTDKLIIFDTTLRDGEQSPGASMTRDEKLRIARQLERLKVDVIEAGFAASSNGDFECVKAIAEVVKDSTICSLARANDRDISRAAEALKPANSGRLHLFLATSALHMEKKLRMTPDQVFEQARLSVRFARNLMADIEFSPEDGYRSDPDFLCRVIEAVINEGATTINVPDTVGYAIPELYGNFIRNLRERIPNSDKAVWSVHCHNDLGMAVANSLAGVKIGGARQVECTINGLGERAGNCSLEEVVMAVKTRKDYFGLDIGIDTQQILAASRLVSQTTGFVVQPNKAVVGANAFAHASGIHQDGVLKARDTYEIMRAEDVGWSANKIVLGKLSGRNAFKQRLQELGVAMESETDINNAFIKFKDLADRKSEIFDEDILALVSDESVTHSNEQYGFVSLSQHSETGERPQACVIFTVAGKEVKGESDGNGPVDASLKAIETHVKSGAEMVLYSVNAISGSTESQGEVTVRLQNSGRVVNGVGSDPDIVVASAKAYLSALNKLQSKADRVAAQG.

The Pyruvate carboxyltransferase domain maps to 5-268 (LIIFDTTLRD…DIGIDTQQIL (264 aa)). Residues D14, H202, H204, and N239 each contribute to the Mn(2+) site. Positions 394–512 (GFVSLSQHSE…SKADRVAAQG (119 aa)) are regulatory domain.

Belongs to the alpha-IPM synthase/homocitrate synthase family. LeuA type 1 subfamily. Homodimer. Mn(2+) serves as cofactor.

It is found in the cytoplasm. It catalyses the reaction 3-methyl-2-oxobutanoate + acetyl-CoA + H2O = (2S)-2-isopropylmalate + CoA + H(+). Its pathway is amino-acid biosynthesis; L-leucine biosynthesis; L-leucine from 3-methyl-2-oxobutanoate: step 1/4. Its function is as follows. Catalyzes the condensation of the acetyl group of acetyl-CoA with 3-methyl-2-oxobutanoate (2-ketoisovalerate) to form 3-carboxy-3-hydroxy-4-methylpentanoate (2-isopropylmalate). This chain is 2-isopropylmalate synthase, found in Polaromonas naphthalenivorans (strain CJ2).